The following is a 257-amino-acid chain: G2/mitotic-specific cyclin S13-7 (257 aa).

Belongs to the cyclin family. Cyclin AB subfamily. As to quaternary structure, interacts with the CDC2 protein kinase to form a serine/threonine kinase holoenzyme complex also known as maturation promoting factor (MPF). The cyclin subunit imparts substrate specificity to the complex.

Essential for the control of the cell cycle at the G2/M (mitosis) transition. In Glycine max (Soybean), this protein is G2/mitotic-specific cyclin S13-7.